We begin with the raw amino-acid sequence, 310 residues long: GMP synthase [glutamine-hydrolyzing] subunit B (310 aa).

The 184-residue stretch at 2-185 (FKTEPFIEES…LGLPDQIAHR (184 aa)) folds into the GMPS ATP-PPase domain. 29–35 (SGGVDSS) contacts ATP.

Heterodimer composed of a glutamine amidotransferase subunit (A) and a GMP-binding subunit (B).

It catalyses the reaction XMP + L-glutamine + ATP + H2O = GMP + L-glutamate + AMP + diphosphate + 2 H(+). It functions in the pathway purine metabolism; GMP biosynthesis; GMP from XMP (L-Gln route): step 1/1. Functionally, catalyzes the synthesis of GMP from XMP. The protein is GMP synthase [glutamine-hydrolyzing] subunit B of Methanococcus maripaludis (strain C7 / ATCC BAA-1331).